The following is a 515-amino-acid chain: Maturase K (515 aa).

Belongs to the intron maturase 2 family. MatK subfamily.

The protein resides in the plastid. Its subcellular location is the chloroplast. In terms of biological role, usually encoded in the trnK tRNA gene intron. Probably assists in splicing its own and other chloroplast group II introns. In Pinus banksiana (Jack pine), this protein is Maturase K.